Here is a 483-residue protein sequence, read N- to C-terminus: CdaA regulatory protein CdaR (483 aa).

The chain crosses the membrane as a helical span at residues 9 to 26 (WAVKIIALLFALLLYVAV). 4 YbbR-like domains span residues 55 to 135 (IPVK…TVTI), 143 to 228 (FPVE…KITV), 237 to 316 (VPFK…TLHI), and 329 to 394 (VPIK…VNGP). Residues 410-483 (LTSKKSNTST…STANSQSSSE (74 aa)) are disordered. A compositionally biased stretch (low complexity) spans 413–430 (KKSNTSTNDNSSNTSGNQ). Residues 431-454 (DTDKQTNDQKNNQQEDTKNTDKNN) show a composition bias toward basic and acidic residues.

In terms of assembly, interacts with CdaA.

It is found in the cell membrane. Functionally, upon coexpression in E.coli stimulates the diadenylate cyclase activity of CdaA about 20-fold. In B.subtilis c-di-AMP is a second messenger that mediates growth, DNA repair and cell wall homeostasis; it is toxic when present in excess. This Bacillus subtilis (strain 168) protein is CdaA regulatory protein CdaR.